A 531-amino-acid chain; its full sequence is MEALSSLTFKGSLPEAIFEAKGKKKLFVVYISGEDEESDKLNRLTWTDASVADSLSKYCILVHIQAGSVDATNFSAIYPYSSVPCIAAIGFSGTQVWRTEGFITAEDLASSLEKAWLGLHIQETTASIFSAALASQNSETPVSSASSVVLPPGSVPLDAAVASPSTASSVQPSETKSTVTSASTTENNDGTVAVKGKESAEPSNLCDTTKNQPAPSVDGTKANVEHEATETPLRVQAEKEPIRPTAPGTNDNTSRVRSSVDRKRKQGTVINEEDSGVGVSGRDINLTKSVDTKETMKPKDEGGEEEDGEKSKKASDVHLNIRLPDGSSLQEKFSVTSILRMVKDYVNSNQTIGLGAYDLAVPYPRKVYTDQDLDKSLSELRLFDRQALVVVPRKRATVYQRGTSYSESNNNTDPNSGGYFAYVRRVLSYANPFSYFGGGTANASSSVPERQTRPNTEVRNNLGQVGTSFQDPSEGRSNVRNRRPTTSRIGSNIHTLNHNEDEAPFGDGNAFWNGNSTQYGGGSGGDSNDRR.

Met1 bears the N-acetylmethionine mark. A compositionally biased stretch (low complexity) spans 160–173 (AVASPSTASSVQPS). 2 disordered regions span residues 160–316 (AVAS…KASD) and 441–531 (ANAS…NDRR). Polar residues-rich tracts occupy residues 174–190 (ETKS…NNDG) and 201–214 (EPSN…NQPA). A compositionally biased stretch (basic and acidic residues) spans 290–301 (VDTKETMKPKDE). One can recognise a UBX domain in the interval 312–390 (KKASDVHLNI…RLFDRQALVV (79 aa)). 2 stretches are compositionally biased toward polar residues: residues 441 to 478 (ANAS…GRSN) and 486 to 496 (TSRIGSNIHTL).

In terms of assembly, interacts with CDC48A.

The chain is Plant UBX domain-containing protein 11 from Arabidopsis thaliana (Mouse-ear cress).